The following is a 390-amino-acid chain: Chorismate synthase (390 aa).

2 residues coordinate NADP(+): Arg39 and Arg45. Residues 132–134 (RSS), 253–254 (NA), Gly298, 313–317 (KPIPT), and Arg339 contribute to the FMN site.

It belongs to the chorismate synthase family. In terms of assembly, homotetramer. Requires FMNH2 as cofactor.

The catalysed reaction is 5-O-(1-carboxyvinyl)-3-phosphoshikimate = chorismate + phosphate. It participates in metabolic intermediate biosynthesis; chorismate biosynthesis; chorismate from D-erythrose 4-phosphate and phosphoenolpyruvate: step 7/7. Functionally, catalyzes the anti-1,4-elimination of the C-3 phosphate and the C-6 proR hydrogen from 5-enolpyruvylshikimate-3-phosphate (EPSP) to yield chorismate, which is the branch point compound that serves as the starting substrate for the three terminal pathways of aromatic amino acid biosynthesis. This reaction introduces a second double bond into the aromatic ring system. This is Chorismate synthase from Bacillus subtilis (strain 168).